Consider the following 442-residue polypeptide: Protein translocase subunit SecF (442 aa).

The disordered stretch occupies residues 1-39 (MASKAKTGRDDEATSAVELTEATESAVARTDGDSTTDTA). A run of 6 helical transmembrane segments spans residues 67–87 (WFGV…FRGF), 187–207 (ITKK…LYIT), 218–238 (AITA…LVGF), 243–263 (ATVI…VIVF), 301–321 (LIGV…LGVG), and 331–351 (LIGI…LLVT). The segment at 366-442 (VLKRRNSGSP…PTGKRNAGRR (77 aa)) is disordered. Over residues 402–432 (QASSQSAPRAAQGSSKPAPGARPVRPVGTRR) the composition is skewed to low complexity. Basic residues predominate over residues 433–442 (PTGKRNAGRR).

This sequence belongs to the SecD/SecF family. SecF subfamily. In terms of assembly, forms a complex with SecD. Part of the essential Sec protein translocation apparatus which comprises SecA, SecYEG and auxiliary proteins SecDF. Other proteins may also be involved.

The protein resides in the cell membrane. Part of the Sec protein translocase complex. Interacts with the SecYEG preprotein conducting channel. SecDF uses the proton motive force (PMF) to complete protein translocation after the ATP-dependent function of SecA. This Mycobacterium tuberculosis (strain ATCC 25618 / H37Rv) protein is Protein translocase subunit SecF.